A 610-amino-acid polypeptide reads, in one-letter code: UvrABC system protein C (610 aa).

The 79-residue stretch at 16–94 (SQPGVYRMYD…IKLYQPRYNV (79 aa)) folds into the GIY-YIG domain. The UVR domain occupies 204–239 (DQVLTQLISRMETASQNLEFEEAARIRDQIQAVRRV).

Belongs to the UvrC family. In terms of assembly, interacts with UvrB in an incision complex.

It is found in the cytoplasm. In terms of biological role, the UvrABC repair system catalyzes the recognition and processing of DNA lesions. UvrC both incises the 5' and 3' sides of the lesion. The N-terminal half is responsible for the 3' incision and the C-terminal half is responsible for the 5' incision. The polypeptide is UvrABC system protein C (Escherichia coli (strain UTI89 / UPEC)).